The following is a 470-amino-acid chain: Hydroxymethylglutaryl-CoA synthase (470 aa).

Glutamate 100 serves as the catalytic Proton donor/acceptor. Residue cysteine 134 is the Acyl-thioester intermediate of the active site. Residues cysteine 134, threonine 176, serine 225, histidine 269, lysine 278, asparagine 348, and serine 382 each coordinate (3S)-3-hydroxy-3-methylglutaryl-CoA. Histidine 269 acts as the Proton donor/acceptor in catalysis.

The protein belongs to the thiolase-like superfamily. HMG-CoA synthase family.

It carries out the reaction acetoacetyl-CoA + acetyl-CoA + H2O = (3S)-3-hydroxy-3-methylglutaryl-CoA + CoA + H(+). Its pathway is metabolic intermediate biosynthesis; (R)-mevalonate biosynthesis; (R)-mevalonate from acetyl-CoA: step 2/3. Its function is as follows. Hydroxymethylglutaryl-CoA synthase; part of the first module of ergosterol biosynthesis pathway that includes the early steps of the pathway, conserved across all eukaryotes, and which results in the formation of mevalonate from acetyl-coenzyme A (acetyl-CoA). This module also plays a key role in the biosynthesis of triterpenes such as ganoderic acids (GA), a group of highly oxygenated lanostane-type triterpenoids which are well recognized as a main group of unique bioactive compounds in the medicinal mushroom Ganoderma lucidum. In this module, the acetyl-CoA acetyltransferase catalyzes the formation of acetoacetyl-CoA. The hydroxymethylglutaryl-CoA synthase HMGS then condenses acetyl-CoA with acetoacetyl-CoA to form HMG-CoA. The rate-limiting step of the early module is the reduction to mevalonate by the 3-hydroxy-3-methylglutaryl-coenzyme A (HMG-CoA) reductase. The polypeptide is Hydroxymethylglutaryl-CoA synthase (Ganoderma lucidum (Ling zhi medicinal fungus)).